We begin with the raw amino-acid sequence, 568 residues long: Small ribosomal subunit protein bS1 (568 aa).

S1 motif domains follow at residues 39-100 (KTVV…LSRE), 118-184 (GEFV…VSRR), 205-273 (GMVL…LGIK), 290-360 (GKQM…LSIK), 377-447 (GTII…LGIK), and 464-533 (GTIV…LSVK).

This sequence belongs to the bacterial ribosomal protein bS1 family.

Binds mRNA; thus facilitating recognition of the initiation point. It is needed to translate mRNA with a short Shine-Dalgarno (SD) purine-rich sequence. In Rickettsia conorii (strain ATCC VR-613 / Malish 7), this protein is Small ribosomal subunit protein bS1 (rpsA).